Reading from the N-terminus, the 277-residue chain is Large ribosomal subunit protein uL2 (277 aa).

The segment at 226–277 is disordered; it reads MNPVDHPHGGGEGRSPIGMPSPVTPWGKPTLGYKTRKPNKKSDRLIVSRRKK.

Belongs to the universal ribosomal protein uL2 family. As to quaternary structure, part of the 50S ribosomal subunit. Forms a bridge to the 30S subunit in the 70S ribosome.

Functionally, one of the primary rRNA binding proteins. Required for association of the 30S and 50S subunits to form the 70S ribosome, for tRNA binding and peptide bond formation. It has been suggested to have peptidyltransferase activity; this is somewhat controversial. Makes several contacts with the 16S rRNA in the 70S ribosome. The protein is Large ribosomal subunit protein uL2 of Symbiobacterium thermophilum (strain DSM 24528 / JCM 14929 / IAM 14863 / T).